We begin with the raw amino-acid sequence, 526 residues long: Flavonoid 3'-monooxygenase CYP75B3 (526 aa).

Residues 6-26 (LPLLLGSLAVSAAVWYLVYFL) traverse the membrane as a helical segment. C461 provides a ligand contact to heme.

It belongs to the cytochrome P450 family. Heme is required as a cofactor.

The protein resides in the membrane. The enzyme catalyses a 3'-unsubstituted flavone + reduced [NADPH--hemoprotein reductase] + O2 = a 3'-hydroxyflavone + oxidized [NADPH--hemoprotein reductase] + H2O + H(+). Its pathway is secondary metabolite biosynthesis; flavonoid biosynthesis. Catalyzes the 3'-hydroxylation of the flavonoid B-ring to the 3',4'-hydroxylated state. Catalyzes the 3'-hydroxylation of apigenin to generate luteolin. This is Flavonoid 3'-monooxygenase CYP75B3 from Oryza sativa subsp. japonica (Rice).